We begin with the raw amino-acid sequence, 507 residues long: Histidine ammonia-lyase (507 aa).

The 5-imidazolinone (Ala-Gly) cross-link spans A141–G143. S142 is modified (2,3-didehydroalanine (Ser)).

Belongs to the PAL/histidase family. Post-translationally, contains an active site 4-methylidene-imidazol-5-one (MIO), which is formed autocatalytically by cyclization and dehydration of residues Ala-Ser-Gly.

It localises to the cytoplasm. It catalyses the reaction L-histidine = trans-urocanate + NH4(+). It participates in amino-acid degradation; L-histidine degradation into L-glutamate; N-formimidoyl-L-glutamate from L-histidine: step 1/3. This chain is Histidine ammonia-lyase, found in Cereibacter sphaeroides (strain ATCC 17029 / ATH 2.4.9) (Rhodobacter sphaeroides).